Consider the following 353-residue polypeptide: Protein-glutamate methylesterase/protein-glutamine glutaminase 4 (353 aa).

In terms of domain architecture, Response regulatory spans 7-124; the sequence is RILVAEDSPT…SPDFDADSRR (118 aa). Residue aspartate 58 is modified to 4-aspartylphosphate. The region spanning 158–350 is the CheB-type methylesterase domain; the sequence is PVSPTRPGVV…SRLTSAFRGS (193 aa). Residues serine 172, histidine 199, and aspartate 292 contribute to the active site.

It belongs to the CheB family. Post-translationally, phosphorylated by CheA. Phosphorylation of the N-terminal regulatory domain activates the methylesterase activity.

The protein localises to the cytoplasm. It carries out the reaction [protein]-L-glutamate 5-O-methyl ester + H2O = L-glutamyl-[protein] + methanol + H(+). The catalysed reaction is L-glutaminyl-[protein] + H2O = L-glutamyl-[protein] + NH4(+). Involved in chemotaxis. Part of a chemotaxis signal transduction system that modulates chemotaxis in response to various stimuli. Catalyzes the demethylation of specific methylglutamate residues introduced into the chemoreceptors (methyl-accepting chemotaxis proteins or MCP) by CheR. Also mediates the irreversible deamidation of specific glutamine residues to glutamic acid. The chain is Protein-glutamate methylesterase/protein-glutamine glutaminase 4 from Myxococcus xanthus (strain DK1622).